A 126-amino-acid polypeptide reads, in one-letter code: Large ribosomal subunit protein bL12 (126 aa).

It belongs to the bacterial ribosomal protein bL12 family. Homodimer. Part of the ribosomal stalk of the 50S ribosomal subunit. Forms a multimeric L10(L12)X complex, where L10 forms an elongated spine to which 2 to 4 L12 dimers bind in a sequential fashion. Binds GTP-bound translation factors.

Functionally, forms part of the ribosomal stalk which helps the ribosome interact with GTP-bound translation factors. Is thus essential for accurate translation. The sequence is that of Large ribosomal subunit protein bL12 from Teredinibacter turnerae (strain ATCC 39867 / T7901).